A 656-amino-acid polypeptide reads, in one-letter code: MLTLRERQINAIKQMLNLNSQQPKAMAADAVWKILIYDRVGQDIISPIISIKELRELGVTLHVQLHSDRDSIPDVPAVYFCLPTDENLDRIQQDFSNGLYDIYHLNFLAPITRSKIENLAAAALHAGCVANIHRVYDQYVNFISLEDDFFILKHQQSDQLSYYAINRANTRDEEMEALMDSIVDSLFALFVTLGNVPIIRCPRNSAAEMVARKLEKKLRENLWDARANLFHMDATQAGGGVFSFQRPVLLLLDRNMDLATPLHHTWSYQALVHDVLDLGLNLVYVEDEGARKKPKACDLDRNDRFWVTHKGSPFPTVAEAIQEELESYRNSEEEIKRLKTSMGIEGESDIAFSLVNDTTAMLTSAVNSLPQLMEKKRLIDMHTKIATAILNCIKARRLDSYFEIEEKIMSKQTLDKPLLELLRDAEFGQPEDKLRLYIIYYICAQQLPEPELERLREALQSAGCDLTALAYVQRWKSIMNRSPSISQATQYEGGGTRTVSMFTKLVSQGSSFVMEGVKNLVVKRHVNINLRLGSDRVKAKLIPNFLENLPVTKITEQVMECRSNAETDDYLYLAPKLLKGGDVLPKNRAPFQDAVVFMVGGGNYIEYQNLVDFIKQKQTSNVHRRIIYGGSTLTNARQFLKELSALGGEIQTPTAS.

Repeat copies occupy residues 85 to 121 (DENL…NLAA), 203 to 245 (RNSA…FSFQ), 419 to 456 (LELL…ERLR), and 460 to 496 (QSAG…GGGT). A 4 X approximate repeats region spans residues 85–496 (DENLDRIQQD…QATQYEGGGT (412 aa)).

Belongs to the STXBP/unc-18/SEC1 family.

It localises to the cytoplasm. The protein resides in the membrane. Its function is as follows. Non-vital for development. This Drosophila virilis (Fruit fly) protein is Protein sly1 homolog (Slh).